The sequence spans 185 residues: Ribosome-recycling factor (185 aa).

The interval 137–162 (DSIDKMVKDGEVGEDEGRRAEKELDD) is disordered.

It belongs to the RRF family.

It localises to the cytoplasm. Functionally, responsible for the release of ribosomes from messenger RNA at the termination of protein biosynthesis. May increase the efficiency of translation by recycling ribosomes from one round of translation to another. The chain is Ribosome-recycling factor from Streptomyces coelicolor (strain ATCC BAA-471 / A3(2) / M145).